The following is a 638-amino-acid chain: Probable beta-glucosidase C (638 aa).

Positions 1-18 are cleaved as a signal peptide; it reads MKVLAPGYLAEASLTALA. Residues N40, N94, N116, N223, and N274 are each glycosylated (N-linked (GlcNAc...) asparagine). The active site involves D341. Residues N364, N480, N488, and N528 are each glycosylated (N-linked (GlcNAc...) asparagine).

It belongs to the glycosyl hydrolase 3 family.

Its subcellular location is the secreted. It catalyses the reaction Hydrolysis of terminal, non-reducing beta-D-glucosyl residues with release of beta-D-glucose.. It participates in glycan metabolism; cellulose degradation. Beta-glucosidases are one of a number of cellulolytic enzymes involved in the degradation of cellulosic biomass. Catalyzes the last step releasing glucose from the inhibitory cellobiose. The sequence is that of Probable beta-glucosidase C (bglC) from Aspergillus oryzae (strain ATCC 42149 / RIB 40) (Yellow koji mold).